The primary structure comprises 198 residues: Pyridoxal 5'-phosphate synthase subunit PdxT (198 aa).

52–54 (GES) is an L-glutamine binding site. Cysteine 84 functions as the Nucleophile in the catalytic mechanism. Residues arginine 115 and 143–144 (IR) each bind L-glutamine. Active-site charge relay system residues include histidine 179 and glutamate 181.

This sequence belongs to the glutaminase PdxT/SNO family. As to quaternary structure, in the presence of PdxS, forms a dodecamer of heterodimers. Only shows activity in the heterodimer.

The catalysed reaction is aldehydo-D-ribose 5-phosphate + D-glyceraldehyde 3-phosphate + L-glutamine = pyridoxal 5'-phosphate + L-glutamate + phosphate + 3 H2O + H(+). The enzyme catalyses L-glutamine + H2O = L-glutamate + NH4(+). It participates in cofactor biosynthesis; pyridoxal 5'-phosphate biosynthesis. Functionally, catalyzes the hydrolysis of glutamine to glutamate and ammonia as part of the biosynthesis of pyridoxal 5'-phosphate. The resulting ammonia molecule is channeled to the active site of PdxS. The chain is Pyridoxal 5'-phosphate synthase subunit PdxT from Methanococcoides burtonii (strain DSM 6242 / NBRC 107633 / OCM 468 / ACE-M).